Reading from the N-terminus, the 200-residue chain is 3-isopropylmalate dehydratase small subunit (200 aa).

Belongs to the LeuD family. LeuD type 1 subfamily. As to quaternary structure, heterodimer of LeuC and LeuD.

It carries out the reaction (2R,3S)-3-isopropylmalate = (2S)-2-isopropylmalate. The protein operates within amino-acid biosynthesis; L-leucine biosynthesis; L-leucine from 3-methyl-2-oxobutanoate: step 2/4. Catalyzes the isomerization between 2-isopropylmalate and 3-isopropylmalate, via the formation of 2-isopropylmaleate. This is 3-isopropylmalate dehydratase small subunit from Campylobacter jejuni subsp. jejuni serotype O:23/36 (strain 81-176).